The primary structure comprises 99 residues: Malonate decarboxylase acyl carrier protein (99 aa).

S25 bears the O-(phosphoribosyl dephospho-coenzyme A)serine mark.

It belongs to the MdcC family. Post-translationally, covalently binds the prosthetic group of malonate decarboxylase.

It is found in the cytoplasm. Subunit of malonate decarboxylase, it is an acyl carrier protein to which acetyl and malonyl thioester residues are bound via a 2'-(5''-phosphoribosyl)-3'-dephospho-CoA prosthetic group and turn over during the catalytic mechanism. The sequence is that of Malonate decarboxylase acyl carrier protein from Pseudomonas aeruginosa (strain UCBPP-PA14).